Here is a 1172-residue protein sequence, read N- to C-terminus: Carbamoyl phosphate synthase arginine-specific large chain, chloroplastic (1172 aa).

Over residues 1–10 (MATSLSSAPT) the composition is skewed to polar residues. Residues 1–37 (MATSLSSAPTQLRPSPSPSHHRLLHRSSLLPFPRRHH) are disordered. The transit peptide at 1-50 (MATSLSSAPTQLRPSPSPSHHRLLHRSSLLPFPRRHHHRRRRCGALSIAR) directs the protein to the chloroplast. The interval 72–473 (GRLAGVRKIM…SFQKAVRSLE (402 aa)) is carboxyphosphate synthetic domain. ATP contacts are provided by R199, R240, G246, G247, K279, L281, E286, G312, V313, H314, Q356, and E370. One can recognise an ATP-grasp 1 domain in the interval 203-399 (KQAMDRIGLK…IAKMAAKLSV (197 aa)). Residues Q356, E370, and N372 each contribute to the Mg(2+) site. The tract at residues 474-623 (TGFAGWGCAP…YSSYEYECES (150 aa)) is oligomerization domain. The carbamoyl phosphate synthetic domain stretch occupies residues 624 to 1019 (VPTNKKKVLI…GAFAKAQIAA (396 aa)). In terms of domain architecture, ATP-grasp 2 spans 761-954 (NAILEELGIE…LAKYASLVMS (194 aa)). R797, K836, L838, E843, G869, I870, H871, S872, Q912, and E925 together coordinate ATP. Residues Q912, E925, and N927 each contribute to the Mg(2+) site. An allosteric domain region spans residues 1020 to 1172 (GQKLPLNGTV…QNLQAAQSAS (153 aa)). One can recognise an MGS-like domain in the interval 1021–1162 (QKLPLNGTVF…QDYFQTTDAS (142 aa)).

It belongs to the CarB family. As to quaternary structure, heterodimer composed of 2 chains; the small (or glutamine) chain promotes the hydrolysis of glutamine to ammonia, which is used by the large (or ammonia) chain to synthesize carbamoyl phosphate. Mg(2+) serves as cofactor. It depends on Mn(2+) as a cofactor.

It localises to the plastid. Its subcellular location is the chloroplast. It catalyses the reaction hydrogencarbonate + L-glutamine + 2 ATP + H2O = carbamoyl phosphate + L-glutamate + 2 ADP + phosphate + 2 H(+). It carries out the reaction hydrogencarbonate + NH4(+) + 2 ATP = carbamoyl phosphate + 2 ADP + phosphate + 2 H(+). It functions in the pathway amino-acid biosynthesis; L-arginine biosynthesis; carbamoyl phosphate from bicarbonate: step 1/1. Large subunit of the arginine-specific carbamoyl phosphate synthase (CPSase). CPSase catalyzes the formation of carbamoyl phosphate from the ammonia moiety of glutamine, hydrogencarbonate, and phosphate donated by ATP, constituting the first step of 2 biosynthetic pathways, one leading to arginine and/or urea and the other to pyrimidine nucleotides. The large subunit (synthetase) binds the substrates ammonia (free or transferred from glutamine from the small subunit), hydrogencarbonate and ATP and carries out an ATP-coupled ligase reaction, activating hydrogencarbonate by forming carboxy phosphate which reacts with ammonia to form carbamoyl phosphate. In Oryza sativa subsp. japonica (Rice), this protein is Carbamoyl phosphate synthase arginine-specific large chain, chloroplastic (CARB).